Here is a 232-residue protein sequence, read N- to C-terminus: Very-long-chain (3R)-3-hydroxyacyl-CoA dehydratase 4 (232 aa).

Topologically, residues 1–19 are cytoplasmic; that stretch reads MGPLALPAWLQPRYRKNAY. The helical transmembrane segment at 20–40 threads the bilayer; the sequence is LFIYYLIQFCGHSWIFTNMTV. The Lumenal portion of the chain corresponds to 41–56; the sequence is RFFSFGKDSMVDTFYA. A helical transmembrane segment spans residues 57 to 77; sequence IGLVMRLCQSVSLLELLHIYV. At 78–112 the chain is on the cytoplasmic side; that stretch reads GIESNHLLPRFLQLTERIIILFVVITSQEEVQEKY. The chain crosses the membrane as a helical span at residues 113-133; the sequence is VVCVLFVFWNLLDMVRYTYSM. The Lumenal segment spans residues 134 to 135; the sequence is LS. The chain crosses the membrane as a helical span at residues 136–156; the sequence is VIGISYAVLTWLSQTLWMPIY. Y156 is a catalytic residue. A topological domain (cytoplasmic) is located at residue P157. Residues 158–178 form a helical membrane-spanning segment; it reads LCVLAEAFAIYQSLPYFESFG. The active site involves E163. Residues 179-189 are Lumenal-facing; the sequence is TYSTKLPFDLS. A helical transmembrane segment spans residues 190 to 210; that stretch reads IYFPYVLKIYLMMLFIGMYFT. Residues 211–232 are Cytoplasmic-facing; the sequence is YSHLYSERRDILGIFPIKKKKM.

This sequence belongs to the very long-chain fatty acids dehydratase HACD family. May interact with enzymes of the ELO family (including ELOVL1); with those enzymes that mediate condensation, the first of the four steps of the reaction cycle responsible for fatty acids elongation, may be part of a larger fatty acids elongase complex. As to expression, highly expressed in leukocytes, and low expression in heart, spleen, kidney, and placenta.

The protein localises to the endoplasmic reticulum membrane. It catalyses the reaction a very-long-chain (3R)-3-hydroxyacyl-CoA = a very-long-chain (2E)-enoyl-CoA + H2O. The enzyme catalyses (3R)-hydroxyhexadecanoyl-CoA = (2E)-hexadecenoyl-CoA + H2O. It functions in the pathway lipid metabolism; fatty acid biosynthesis. Functionally, catalyzes the third of the four reactions of the long-chain fatty acids elongation cycle. This endoplasmic reticulum-bound enzymatic process, allows the addition of two carbons to the chain of long- and very long-chain fatty acids/VLCFAs per cycle. This enzyme catalyzes the dehydration of the 3-hydroxyacyl-CoA intermediate into trans-2,3-enoyl-CoA, within each cycle of fatty acid elongation. Thereby, it participates in the production of VLCFAs of different chain lengths that are involved in multiple biological processes as precursors of membrane lipids and lipid mediators. This chain is Very-long-chain (3R)-3-hydroxyacyl-CoA dehydratase 4, found in Homo sapiens (Human).